The sequence spans 201 residues: MKSLQTICLLFIFIARGTSDKCEICHGFGDDCDGYQEECPSPEDRCGKILIDIALAPVSFRATHKNCFSSSICKLGRVDIHVWDGVYIRGRTNCCDNDQCEDQPLPGLPLSLQNGLYCPGAFGIFTEDSTEHEVKCRGTETMCLDLVGYRQESYAGNITYNIKGCVSSCPLVTLSERGHEGRKNDLKKVECREALKPASSD.

Positions 1–19 are cleaved as a signal peptide; it reads MKSLQTICLLFIFIARGTS. Intrachain disulfides connect Cys22–Cys46, Cys25–Cys32, Cys39–Cys67, Cys73–Cys94, Cys95–Cys100, Cys118–Cys143, Cys136–Cys165, and Cys169–Cys191. Asn157 carries an N-linked (GlcNAc...) asparagine glycan.

Homohexamer. In terms of processing, glycosylated. As to expression, expressed by the liver.

It is found in the secreted. Its function is as follows. Inhibits the enzymatic activity of phospholipase A2 (PA2). Binds to the major PLA2 toxin of D.russelli siamensis (Daboiatoxin, AC Q7T2R1, and AC Q7T3T5) at 1-2-fold molar excess of inhibitor to toxin. It exhibits broad spectra in neutralizing the toxicity of various snake venoms and toxins and inhibits the formation of edema in mice. May bind to PLA2 through its proline-rich hydrophobic core region. This chain is Phospholipase A2 inhibitor PIP, found in Malayopython reticulatus (Reticulate python).